A 159-amino-acid polypeptide reads, in one-letter code: MQKRAIYPGTFDPITNGHIDIVTRATQMFDHVILAIAASPSKKPMFTLEERVALTQQATAHLGNVEVVGFSDLMANFARNQHATVLIRGLRAVADFEYEMQLAHMNRHLMPELESVFLMPSKEWSFISSSLVKEVARHQGDVTHFLPENVHQALVAKLA.

Thr10 contributes to the substrate binding site. ATP is bound by residues 10–11 (TF) and His18. Lys42, Met74, and Arg88 together coordinate substrate. Residues 89–91 (GLR), Glu99, and 124–130 (WSFISSS) contribute to the ATP site.

It belongs to the bacterial CoaD family. As to quaternary structure, homohexamer. The cofactor is Mg(2+).

The protein resides in the cytoplasm. It catalyses the reaction (R)-4'-phosphopantetheine + ATP + H(+) = 3'-dephospho-CoA + diphosphate. It functions in the pathway cofactor biosynthesis; coenzyme A biosynthesis; CoA from (R)-pantothenate: step 4/5. Functionally, reversibly transfers an adenylyl group from ATP to 4'-phosphopantetheine, yielding dephospho-CoA (dPCoA) and pyrophosphate. This chain is Phosphopantetheine adenylyltransferase, found in Shigella sonnei (strain Ss046).